The following is a 351-amino-acid chain: Protein Maqu_2141 (351 aa).

The protein belongs to the proline racemase family.

Functionally, displays neither proline racemase activity nor trans-4-hydroxy-L-proline (t4LHyp) epimerase activity nor t3LHyp dehydratase activity. In Marinobacter nauticus (strain ATCC 700491 / DSM 11845 / VT8) (Marinobacter aquaeolei), this protein is Protein Maqu_2141.